A 540-amino-acid polypeptide reads, in one-letter code: Zinc finger protein 768 (540 aa).

Disordered regions lie at residues 1 to 166 (MERE…FEAQ) and 239 to 258 (TGAL…GQGP). 3 positions are modified to phosphoserine: S17, S18, and S23. Phosphotyrosine is present on Y27. S33 carries the phosphoserine modification. Acidic residues predominate over residues 34 to 53 (ENEEEEISQQEGSGDYEVEE). S62, S69, S76, S83, S90, S97, S104, S107, S111, S118, and S125 each carry phosphoserine. A compositionally biased stretch (low complexity) spans 62–77 (SPGFEPQSPEFEPQSP). Polar residues predominate over residues 107 to 119 (SDSQSPEFESQSP). Position 128 is a phosphotyrosine (Y128). The residue at position 132 (S132) is a Phosphoserine. Y135 is subject to Phosphotyrosine. A Phosphoserine modification is found at S139. Y142 is subject to Phosphotyrosine. Residues S144 and S147 each carry the phosphoserine modification. A compositionally biased stretch (polar residues) spans 149 to 166 (YESQNTELKTQSPEFEAQ). A Phosphothreonine modification is found at T158. Phosphoserine is present on S160. The C2H2-type 1 zinc-finger motif lies at 261-283 (NICGICGKSFGRGSTLIQHQRIH). T284 is modified (phosphothreonine). A Phosphotyrosine modification is found at Y289. 4 consecutive C2H2-type zinc fingers follow at residues 289–311 (YKCE…QRTH), 317–339 (YKCP…QRTH), 345–367 (YKCP…QRTH), and 373–395 (YSCT…QRVH). A phosphoserine mark is found at S295 and S299. T396 bears the Phosphothreonine mark. 5 consecutive C2H2-type zinc fingers follow at residues 401–423 (FSCG…ARSH), 429–451 (FKCP…ARTH), 457–479 (YSCP…QRSH), 485–507 (YRCA…HRVH), and 513–535 (YKCD…QRTH). S442 carries the post-translational modification Phosphoserine.

It belongs to the krueppel C2H2-type zinc-finger protein family. As to quaternary structure, interacts (via zinc-finger domains) with TP53 (via N-terminus); interaction might be facilitated by TP53 oligomerization state. Interacts with ELP3. Post-translationally, may be phosphorylated at residue 'Ser-5' of the tandem heptapeptide repeats in the N-terminus. Phosphorylation might be increased upon RAS pathway activation and negatively regulate protein stability.

It is found in the nucleus. It localises to the chromosome. Functionally, binds to mammalian-wide interspersed repeat (MIRs) sequences in euchromatin and promoter regions of genes at the consensus sequence 5'-GCTGTGTG-[N20]-CCTCTCTG-3', consisting of two anchor regions connected by a linker region; the linker region probably does not contribute to the binding specificity. Required for cell homeostasis. May be involved in transcriptional regulation. The protein is Zinc finger protein 768 (ZNF768) of Homo sapiens (Human).